The chain runs to 274 residues: 4-hydroxy-tetrahydrodipicolinate reductase (274 aa).

NAD(+)-binding positions include glycine 11 to methionine 16 and glutamate 37. Arginine 38 contributes to the NADP(+) binding site. Residues glycine 101–threonine 103 and alanine 125–methionine 128 contribute to the NAD(+) site. The active-site Proton donor/acceptor is the histidine 158. Histidine 159 is a (S)-2,3,4,5-tetrahydrodipicolinate binding site. Lysine 162 functions as the Proton donor in the catalytic mechanism. (S)-2,3,4,5-tetrahydrodipicolinate is bound at residue glycine 168 to threonine 169.

This sequence belongs to the DapB family.

The protein resides in the cytoplasm. The catalysed reaction is (S)-2,3,4,5-tetrahydrodipicolinate + NAD(+) + H2O = (2S,4S)-4-hydroxy-2,3,4,5-tetrahydrodipicolinate + NADH + H(+). It carries out the reaction (S)-2,3,4,5-tetrahydrodipicolinate + NADP(+) + H2O = (2S,4S)-4-hydroxy-2,3,4,5-tetrahydrodipicolinate + NADPH + H(+). It participates in amino-acid biosynthesis; L-lysine biosynthesis via DAP pathway; (S)-tetrahydrodipicolinate from L-aspartate: step 4/4. Functionally, catalyzes the conversion of 4-hydroxy-tetrahydrodipicolinate (HTPA) to tetrahydrodipicolinate. The sequence is that of 4-hydroxy-tetrahydrodipicolinate reductase from Shewanella pealeana (strain ATCC 700345 / ANG-SQ1).